Reading from the N-terminus, the 478-residue chain is Methionine aminopeptidase 2 (478 aa).

Residues 1–122 (MAGVEEVAAS…TDPPSVPICD (122 aa)) are disordered. The residue at position 2 (A2) is an N-acetylalanine. Over residues 36–46 (KKKRRKKKKSK) the composition is skewed to basic residues. S45 is modified (phosphoserine). Positions 55 to 79 (EPDKESGASVDEVARQLERSALEDK) are enriched in basic and acidic residues. Residues S60 and S63 each carry the phosphoserine; alternate modification. Residues S60 and S63 are each glycosylated (O-linked (GlcNAc) serine; alternate). S74 carries the post-translational modification Phosphoserine. Residues 80-92 (ERDEDDEDGDGDG) are compositionally biased toward acidic residues. Residues 97–109 (GKKKKKKKKKRGP) show a composition bias toward basic residues. Residue H231 coordinates substrate. A divalent metal cation contacts are provided by D251, D262, and H331. H339 provides a ligand contact to substrate. The a divalent metal cation site is built by E364 and E459.

Belongs to the peptidase M24A family. Methionine aminopeptidase eukaryotic type 2 subfamily. Interacts strongly with the eIF-2 gamma-subunit EIF2S3. Binds EIF2S1 at low magnesium concentrations. It depends on Co(2+) as a cofactor. Requires Zn(2+) as cofactor. The cofactor is Mn(2+). Fe(2+) is required as a cofactor. Contains approximately 12 O-linked N-acetylglucosamine (GlcNAc) residues. O-glycosylation is required for EIF2S1 binding.

The protein localises to the cytoplasm. The enzyme catalyses Release of N-terminal amino acids, preferentially methionine, from peptides and arylamides.. In terms of biological role, cotranslationally removes the N-terminal methionine from nascent proteins. The N-terminal methionine is often cleaved when the second residue in the primary sequence is small and uncharged (Met-Ala-, Cys, Gly, Pro, Ser, Thr, or Val). The catalytic activity of human METAP2 toward Met-Val peptides is consistently two orders of magnitude higher than that of METAP1, suggesting that it is responsible for processing proteins containing N-terminal Met-Val and Met-Thr sequences in vivo. Its function is as follows. Protects eukaryotic initiation factor EIF2S1 from translation-inhibiting phosphorylation by inhibitory kinases such as EIF2AK2/PKR and EIF2AK1/HCR. Plays a critical role in the regulation of protein synthesis. The chain is Methionine aminopeptidase 2 from Homo sapiens (Human).